The primary structure comprises 233 residues: 2-C-methyl-D-erythritol 4-phosphate cytidylyltransferase (233 aa).

Belongs to the IspD/TarI cytidylyltransferase family. IspD subfamily.

It carries out the reaction 2-C-methyl-D-erythritol 4-phosphate + CTP + H(+) = 4-CDP-2-C-methyl-D-erythritol + diphosphate. It participates in isoprenoid biosynthesis; isopentenyl diphosphate biosynthesis via DXP pathway; isopentenyl diphosphate from 1-deoxy-D-xylulose 5-phosphate: step 2/6. Functionally, catalyzes the formation of 4-diphosphocytidyl-2-C-methyl-D-erythritol from CTP and 2-C-methyl-D-erythritol 4-phosphate (MEP). The chain is 2-C-methyl-D-erythritol 4-phosphate cytidylyltransferase from Nitrosomonas eutropha (strain DSM 101675 / C91 / Nm57).